The sequence spans 310 residues: M1-specific T cell receptor beta chain (310 aa).

Residues 1–21 form the signal peptide; that stretch reads MSNQVLCCVVLCLLGANTVDG. The t cell receptor beta variable 19 stretch occupies residues 22–114; the sequence is GITQSPKYLF…TAFYLCASSI (93 aa). One can recognise an Ig-like V-type domain in the interval 34–131; it reads EGQNVTLSCE…FGPGTRLTVT (98 aa). An N-linked (GlcNAc...) asparagine glycan is attached at asparagine 37. A disulfide bond links cysteine 42 and cysteine 110. Residues 46–50 are CDR1; that stretch reads LNHDA. Aspartate 49 serves as a coordination point for a peptide antigen. Residues 68–73 are CDR2; it reads SQIVND. Residues 110–122 are CDR3; the sequence is CASSIRSSYEQYF. A t cell receptor beta joining 2-7 region spans residues 117–131; sequence SYEQYFGPGTRLTVT. A t cell receptor beta constant 2 region spans residues 133 to 310; that stretch reads DLKNVFPPKV…AMVKRKDSRG (178 aa). Residues 140–249 form the Ig-like C1-type domain; it reads PKVAVFEPSE…WTQDRAKPVT (110 aa). Cysteine 162 and cysteine 227 are disulfide-bonded. Residue asparagine 201 is glycosylated (N-linked (GlcNAc...) asparagine). The interval 262 to 276 is connecting peptide; that stretch reads CGFTSESYQQGVLSA. Residues 277-299 form a helical membrane-spanning segment; that stretch reads TILYEILLGKATLYAVLVSALVL. The Cytoplasmic segment spans residues 300-310; that stretch reads MAMVKRKDSRG.

Disulfide-linked heterodimer with TRAV27*01J42*01C*01 alpha chain. The TR primarily interacts via its CDR3-beta domain with M/matrix protein 1-derived peptide (GILGFVFTL) displayed by HLA-A*02.01 in a 'peg-notch' recognition mode. The alpha-beta TR associates with the transmembrane signaling CD3 coreceptor proteins to form the TR-CD3 (TCR). The assembly of alpha-beta TR heterodimers with CD3 occurs in the endoplasmic reticulum where a single alpha-beta TR heterodimer associates with one CD3D-CD3E heterodimer, one CD3G-CD3E heterodimer and one CD247 homodimer forming a stable octameric structure. CD3D-CD3E and CD3G-CD3E heterodimers preferentially associate with TR alpha and TR beta chains (via TM domain), respectively. The association of the CD247 homodimer is the last step of TCR assembly in the endoplasmic reticulum and is required for transport to the cell surface. As to expression, expressed in M/matrix protein 1-specific effector memory CD8-positive T cells readily detectable in the peripheral blood, secondary lymphoid organs and lung (primary site of infection) of IAV infected individuals.

The protein resides in the cell membrane. Its function is as follows. The beta chain of TRAV27*01J42*01C*01/TRBV19*01J2S7*01C*02 alpha-beta T cell receptor (TR) clonotype that is specific for HLA-A*02:01-restricted M/matrix protein 1 immunodominant epitope GILGFVFTL of influenza A virus (IAV). Classified as a public TCR clonotype, it is preferentially selected in effector memory CD8-positive T cells among multiple HLA-A*02:01 carriers/individuals and confers long-lived immunity against IAV infection. Can cross-recognize sporadically emerging IAV variants by molecular mimicry, inducing immunity toward different influenza strains. Antigen recognition initiates TR-CD3 clustering on the cell surface and intracellular activation of LCK that phosphorylates the ITAM motifs of CD3G, CD3D, CD3E and CD247 enabling the recruitment of ZAP70. In turn, ZAP70 phosphorylates LAT, which recruits numerous signaling molecules to form the LAT signalosome. The LAT signalosome propagates signal branching to three major signaling pathways, the calcium, the mitogen-activated protein kinase (MAPK) kinase and the nuclear factor NF-kappa-B (NF-kB) pathways, leading to the mobilization of transcription factors that are critical for gene expression and essential for T cell differentiation into effector/memory T cells. The sequence is that of M1-specific T cell receptor beta chain from Homo sapiens (Human).